The primary structure comprises 438 residues: Enolase (438 aa).

The substrate site is built by histidine 159 and glutamate 168. The Proton donor role is filled by glutamate 211. Residues aspartate 246, glutamate 297, and aspartate 322 each contribute to the Mg(2+) site. Substrate is bound by residues glutamate 297 and aspartate 322. Residue lysine 347 is the Proton acceptor of the active site. Residues 374–377 (SHRS) and lysine 398 each bind substrate.

The protein belongs to the enolase family. Homodimer. The cofactor is Mg(2+).

It is found in the cytoplasm. It catalyses the reaction (2R)-2-phosphoglycerate = phosphoenolpyruvate + H2O. It functions in the pathway carbohydrate degradation; glycolysis; pyruvate from D-glyceraldehyde 3-phosphate: step 4/5. Functionally, involved in osmoadaptation. The polypeptide is Enolase (enoA) (Emericella nidulans (strain FGSC A4 / ATCC 38163 / CBS 112.46 / NRRL 194 / M139) (Aspergillus nidulans)).